The primary structure comprises 854 residues: Envelope glycoprotein gp160 (854 aa).

The first 31 residues, 1–31, serve as a signal peptide directing secretion; sequence MKVMEKKKRDWNSLSIITIITIILLTPCLTS. The Extracellular portion of the chain corresponds to 32–675; it reads ELWVTVYYGV…ITKWLWYIKI (644 aa). 6 disulfides stabilise this stretch: cysteine 53-cysteine 73, cysteine 118-cysteine 203, cysteine 125-cysteine 194, cysteine 130-cysteine 155, cysteine 216-cysteine 245, and cysteine 226-cysteine 237. The tract at residues 130 to 154 is V1; that stretch reads CSKANFSQAKNLTNQTSSPPLEMKN. N-linked (GlcNAc...) asparagine; by host glycans are attached at residues asparagine 134, asparagine 140, asparagine 143, asparagine 154, asparagine 158, asparagine 186, and asparagine 195. The interval 155 to 194 is V2; it reads CSFNVTTELRDKKKQVYSLFYVEDVVNLGNENNTYRIINC. N-linked (GlcNAc...) asparagine; by host glycans are attached at residues asparagine 239, asparagine 260, asparagine 267, asparagine 274, asparagine 299, asparagine 331, asparagine 336, asparagine 351, and asparagine 356. The interval 294-327 is V3; sequence CHRPGNNTRGEVQIGPGMTFYNIENVVGDTRSAY. The cysteines at positions 294 and 328 are disulfide-linked. The interval 362-372 is CD4-binding loop; the sequence is ASGGDPEVTHH. Intrachain disulfides connect cysteine 376–cysteine 429 and cysteine 383–cysteine 402. A V4 region spans residues 383-402; sequence CNTSQIFTDNITNGIIILPC. N-linked (GlcNAc...) asparagine; by host glycans are attached at residues asparagine 384, asparagine 392, asparagine 426, asparagine 432, asparagine 446, and asparagine 450. V5 regions lie at residues 445 to 456 and 447 to 456; these read TNNSGNLTFRPT and NSGNLTFRPT. The fusion peptide stretch occupies residues 501 to 522; it reads AAFGLGALFLGFLGAAGSTMGA. Positions 564-582 are immunosuppression; the sequence is KQLQARLLAVERYLQDQQI. Cysteine 588 and cysteine 594 form a disulfide bridge. Residues asparagine 601, asparagine 608, asparagine 616, and asparagine 628 are each glycosylated (N-linked (GlcNAc...) asparagine; by host). Residues 624-658 are a coiled coil; sequence KLVSNYTGKIFGLLEEAQSQQEKNERDLLELDQWA. Residues 653–674 are MPER; binding to GalCer; sequence ELDQWASLWNWFDITKWLWYIK. The chain crosses the membrane as a helical span at residues 676 to 696; sequence FLMAVGGIIGLRIIMTVFSVV. Residues 697-854 lie on the Cytoplasmic side of the membrane; the sequence is RRVRQGYSPL…IRQGLERALL (158 aa). A YXXL motif; contains endocytosis signal motif is present at residues 703–706; that stretch reads YSPL. Positions 853–854 match the Di-leucine internalization motif motif; that stretch reads LL.

It belongs to the HIV-1 env protein family. As to quaternary structure, the mature envelope protein (Env) consists of a homotrimer of non-covalently associated gp120-gp41 heterodimers. The resulting complex protrudes from the virus surface as a spike. There seems to be as few as 10 spikes on the average virion. Interacts with host CD4, CCR5 and CXCR4. Gp120 also interacts with the C-type lectins CD209/DC-SIGN and CLEC4M/DC-SIGNR (collectively referred to as DC-SIGN(R)). Gp120 and gp41 interact with GalCer. Gp120 interacts with host ITGA4/ITGB7 complex; on CD4+ T-cells, this interaction results in rapid activation of integrin ITGAL/LFA-1, which facilitates efficient cell-to-cell spreading of HIV-1. Gp120 interacts with cell-associated heparan sulfate; this interaction increases virus infectivity on permissive cells and may be involved in infection of CD4- cells. In terms of assembly, the mature envelope protein (Env) consists of a homotrimer of non-covalently associated gp120-gp41 heterodimers. The resulting complex protrudes from the virus surface as a spike. There seems to be as few as 10 spikes on the average virion. Post-translationally, highly glycosylated by host. The high number of glycan on the protein is reffered to as 'glycan shield' because it contributes to hide protein sequence from adaptive immune system. In terms of processing, palmitoylation of the transmembrane protein and of Env polyprotein (prior to its proteolytic cleavage) is essential for their association with host cell membrane lipid rafts. Palmitoylation is therefore required for envelope trafficking to classical lipid rafts, but not for viral replication. Specific enzymatic cleavages in vivo yield mature proteins. Envelope glycoproteins are synthesized as an inactive precursor that is heavily N-glycosylated and processed likely by host cell furin in the Golgi to yield the mature SU and TM proteins. The cleavage site between SU and TM requires the minimal sequence [KR]-X-[KR]-R. About 2 of the 9 disulfide bonds of gp41 are reduced by P4HB/PDI, following binding to CD4 receptor.

The protein localises to the virion membrane. Its subcellular location is the host cell membrane. The protein resides in the host endosome membrane. In terms of biological role, attaches the virus to the host lymphoid cell by binding to the primary receptor CD4. This interaction induces a structural rearrangement creating a high affinity binding site for a chemokine coreceptor like CXCR4 and/or CCR5. Acts as a ligand for CD209/DC-SIGN and CLEC4M/DC-SIGNR, which are respectively found on dendritic cells (DCs), and on endothelial cells of liver sinusoids and lymph node sinuses. These interactions allow capture of viral particles at mucosal surfaces by these cells and subsequent transmission to permissive cells. HIV subverts the migration properties of dendritic cells to gain access to CD4+ T-cells in lymph nodes. Virus transmission to permissive T-cells occurs either in trans (without DCs infection, through viral capture and transmission), or in cis (following DCs productive infection, through the usual CD4-gp120 interaction), thereby inducing a robust infection. In trans infection, bound virions remain infectious over days and it is proposed that they are not degraded, but protected in non-lysosomal acidic organelles within the DCs close to the cell membrane thus contributing to the viral infectious potential during DCs' migration from the periphery to the lymphoid tissues. On arrival at lymphoid tissues, intact virions recycle back to DCs' cell surface allowing virus transmission to CD4+ T-cells. Acts as a class I viral fusion protein. Under the current model, the protein has at least 3 conformational states: pre-fusion native state, pre-hairpin intermediate state, and post-fusion hairpin state. During fusion of viral and target intracellular membranes, the coiled coil regions (heptad repeats) assume a trimer-of-hairpins structure, positioning the fusion peptide in close proximity to the C-terminal region of the ectodomain. The formation of this structure appears to drive apposition and subsequent fusion of viral and target cell membranes. Complete fusion occurs in host cell endosomes and is dynamin-dependent, however some lipid transfer might occur at the plasma membrane. The virus undergoes clathrin-dependent internalization long before endosomal fusion, thus minimizing the surface exposure of conserved viral epitopes during fusion and reducing the efficacy of inhibitors targeting these epitopes. Membranes fusion leads to delivery of the nucleocapsid into the cytoplasm. Its function is as follows. Oligomerizes in the host endoplasmic reticulum into predominantly trimers. In a second time, gp160 transits in the host Golgi, where glycosylation is completed. The precursor is then proteolytically cleaved in the trans-Golgi and thereby activated by cellular furin or furin-like proteases to produce gp120 and gp41. This Pan (chimpanzees) protein is Envelope glycoprotein gp160.